The following is an 838-amino-acid chain: Protein P (838 aa).

Positions 1 to 177 are terminal protein domain (TP); that stretch reads MPLSYQHFRK…FCGSPYSWEQ (177 aa). The interval 178-341 is spacer; the sequence is ELQHQTSTRH…YCLTHIVNLL (164 aa). Disordered stretches follow at residues 215 to 238 and 285 to 311; these read QSRLGLQPQQGSMARGKSGRSGSI and STSKRQSSSGHAVEFHNIPPSSARSQS. Positions 285-294 are enriched in polar residues; that stretch reads STSKRQSSSG. Positions 342 to 685 are polymerase/reverse transcriptase domain (RT); that stretch reads EDWGPCTEHG…YLHLYPVARQ (344 aa). The region spanning 352-595 is the Reverse transcriptase domain; sequence EHNIRIPRTP…YSLNFMGYVI (244 aa). Mg(2+) contacts are provided by Asp-424, Asp-546, and Asp-547.

It belongs to the hepadnaviridae P protein family.

The enzyme catalyses DNA(n) + a 2'-deoxyribonucleoside 5'-triphosphate = DNA(n+1) + diphosphate. It carries out the reaction Endonucleolytic cleavage to 5'-phosphomonoester.. Activated by host HSP70 and HSP40 in vitro to be able to bind the epsilon loop of the pgRNA. Because deletion of the RNase H region renders the protein partly chaperone-independent, the chaperones may be needed indirectly to relieve occlusion of the RNA-binding site by this domain. Inhibited by several reverse-transcriptase inhibitors: Lamivudine, Adefovir and Entecavir. Functionally, multifunctional enzyme that converts the viral RNA genome into dsDNA in viral cytoplasmic capsids. This enzyme displays a DNA polymerase activity that can copy either DNA or RNA templates, and a ribonuclease H (RNase H) activity that cleaves the RNA strand of RNA-DNA heteroduplexes in a partially processive 3'- to 5'-endonucleasic mode. Neo-synthesized pregenomic RNA (pgRNA) are encapsidated together with the P protein, and reverse-transcribed inside the nucleocapsid. Initiation of reverse-transcription occurs first by binding the epsilon loop on the pgRNA genome, and is initiated by protein priming, thereby the 5'-end of (-)DNA is covalently linked to P protein. Partial (+)DNA is synthesized from the (-)DNA template and generates the relaxed circular DNA (RC-DNA) genome. After budding and infection, the RC-DNA migrates in the nucleus, and is converted into a plasmid-like covalently closed circular DNA (cccDNA). The activity of P protein does not seem to be necessary for cccDNA generation, and is presumably released from (+)DNA by host nuclear DNA repair machinery. In Homo sapiens (Human), this protein is Protein P.